The following is a 397-amino-acid chain: 3-ketoacyl-CoA thiolase, mitochondrial (397 aa).

Residues 1–16 constitute a mitochondrion; not cleaved transit peptide; that stretch reads MALLRGVFVVAAKRTP. Lysine 25 is subject to N6-acetyllysine; alternate. Position 25 is an N6-succinyllysine; alternate (lysine 25). Lysine 45 carries the post-translational modification N6-succinyllysine. The active-site Acyl-thioester intermediate is the cysteine 92. The residue at position 119 (threonine 119) is a Phosphothreonine. Serine 121 is modified (phosphoserine). A Phosphotyrosine modification is found at tyrosine 127. Threonine 136 is subject to Phosphothreonine. Lysine 137 carries the N6-acetyllysine; alternate modification. At lysine 137 the chain carries N6-succinyllysine; alternate. The residue at position 140 (serine 140) is a Phosphoserine. N6-acetyllysine; alternate is present on residues lysine 143, lysine 171, lysine 191, and lysine 209. N6-succinyllysine; alternate occurs at positions 143, 171, 191, and 209. N6-succinyllysine is present on residues lysine 211, lysine 212, and lysine 214. CoA is bound by residues arginine 224 and threonine 227. Lysine 234 is subject to N6-acetyllysine; alternate. N6-succinyllysine; alternate is present on lysine 234. An N6-succinyllysine modification is found at lysine 240. Position 241 is an N6-acetyllysine (lysine 241). Residue serine 251 coordinates CoA. N6-acetyllysine is present on residues lysine 269 and lysine 270. Lysine 305 carries the N6-acetyllysine; alternate modification. Lysine 305 bears the N6-succinyllysine; alternate mark. Serine 310 bears the Phosphoserine mark. Lysine 312 carries the N6-acetyllysine; alternate modification. Lysine 312 bears the N6-succinyllysine; alternate mark. Serine 333 carries the phosphoserine modification. An N6-acetyllysine mark is found at lysine 340 and lysine 375. Cysteine 382 (proton donor/acceptor) is an active-site residue.

Belongs to the thiolase-like superfamily. Thiolase family. In terms of assembly, homotetramer. Interacts with BNIP3.

The protein localises to the mitochondrion. It carries out the reaction an acyl-CoA + acetyl-CoA = a 3-oxoacyl-CoA + CoA. The enzyme catalyses 2 acetyl-CoA = acetoacetyl-CoA + CoA. The catalysed reaction is acetyl-CoA + H2O = acetate + CoA + H(+). It catalyses the reaction propanoyl-CoA + H2O = propanoate + CoA + H(+). It carries out the reaction butanoyl-CoA + H2O = butanoate + CoA + H(+). The enzyme catalyses hexanoyl-CoA + H2O = hexanoate + CoA + H(+). The catalysed reaction is octanoyl-CoA + H2O = octanoate + CoA + H(+). It catalyses the reaction decanoyl-CoA + H2O = decanoate + CoA + H(+). It carries out the reaction dodecanoyl-CoA + H2O = dodecanoate + CoA + H(+). The enzyme catalyses tetradecanoyl-CoA + H2O = tetradecanoate + CoA + H(+). The catalysed reaction is hexadecanoyl-CoA + H2O = hexadecanoate + CoA + H(+). It participates in lipid metabolism; fatty acid beta-oxidation. In the production of energy from fats, this is one of the enzymes that catalyzes the last step of the mitochondrial beta-oxidation pathway, an aerobic process breaking down fatty acids into acetyl-CoA. Using free coenzyme A/CoA, catalyzes the thiolytic cleavage of medium- to long-chain unbranched 3-oxoacyl-CoAs into acetyl-CoA and a fatty acyl-CoA shortened by two carbon atoms. Also catalyzes the condensation of two acetyl-CoA molecules into acetoacetyl-CoA and could be involved in the production of ketone bodies. Also displays hydrolase activity on various fatty acyl-CoAs. Thereby, could be responsible for the production of acetate in a side reaction to beta-oxidation. Abolishes BNIP3-mediated apoptosis and mitochondrial damage. In Homo sapiens (Human), this protein is 3-ketoacyl-CoA thiolase, mitochondrial (ACAA2).